Here is a 296-residue protein sequence, read N- to C-terminus: Protoheme IX farnesyltransferase (296 aa).

Transmembrane regions (helical) follow at residues 9–29 (VTKP…FLLA), 36–56 (YPLF…GCVF), 84–104 (AVSL…LWFG), 108–128 (LACW…SLYM), 133–153 (VYGT…GYCA), 163–183 (LILL…IAIF), 209–229 (ITLY…GGYA), 234–254 (LVVA…GYKV), and 265–285 (FGFS…DFMV).

The protein belongs to the UbiA prenyltransferase family. Protoheme IX farnesyltransferase subfamily.

It is found in the cell inner membrane. The enzyme catalyses heme b + (2E,6E)-farnesyl diphosphate + H2O = Fe(II)-heme o + diphosphate. The protein operates within porphyrin-containing compound metabolism; heme O biosynthesis; heme O from protoheme: step 1/1. Its function is as follows. Converts heme B (protoheme IX) to heme O by substitution of the vinyl group on carbon 2 of heme B porphyrin ring with a hydroxyethyl farnesyl side group. This is Protoheme IX farnesyltransferase from Citrobacter koseri (strain ATCC BAA-895 / CDC 4225-83 / SGSC4696).